The chain runs to 113 residues: Flagellar transcriptional regulator FlhD (113 aa).

Belongs to the FlhD family. As to quaternary structure, homodimer; disulfide-linked. Forms a heterohexamer composed of two FlhC and four FlhD subunits. Each FlhC binds a FlhD dimer, forming a heterotrimer, and a hexamer assembles by dimerization of two heterotrimers.

The protein resides in the cytoplasm. Functionally, functions in complex with FlhC as a master transcriptional regulator that regulates transcription of several flagellar and non-flagellar operons by binding to their promoter region. Activates expression of class 2 flagellar genes, including fliA, which is a flagellum-specific sigma factor that turns on the class 3 genes. Also regulates genes whose products function in a variety of physiological pathways. This Salmonella typhi protein is Flagellar transcriptional regulator FlhD.